A 242-amino-acid polypeptide reads, in one-letter code: MSKSRLTVFSFVRRFLLRLMVVLAIFWGGGIALFSVAPVPFSAVMVERQVSAWLHGNFRYVAHSDWVSMDQISPWMGLAVIAAEDQKFPEHWGFDVASIEQALAHNERNENRIRGASTISQQTAKNLFLWDGRSWVRKGLEAGLTLGIETVWSKKRILTVYLNIAEFGDGVFGVEAAAQRYFHKPASKLTRSEAALLAAVLPNPLRFKVSAPSGYVRSRQAWILRQMYQLGGEPFMQQHQLD.

Residues 19-39 (LMVVLAIFWGGGIALFSVAPV) traverse the membrane as a helical segment.

Belongs to the glycosyltransferase 51 family.

The protein resides in the cell inner membrane. The catalysed reaction is [GlcNAc-(1-&gt;4)-Mur2Ac(oyl-L-Ala-gamma-D-Glu-L-Lys-D-Ala-D-Ala)](n)-di-trans,octa-cis-undecaprenyl diphosphate + beta-D-GlcNAc-(1-&gt;4)-Mur2Ac(oyl-L-Ala-gamma-D-Glu-L-Lys-D-Ala-D-Ala)-di-trans,octa-cis-undecaprenyl diphosphate = [GlcNAc-(1-&gt;4)-Mur2Ac(oyl-L-Ala-gamma-D-Glu-L-Lys-D-Ala-D-Ala)](n+1)-di-trans,octa-cis-undecaprenyl diphosphate + di-trans,octa-cis-undecaprenyl diphosphate + H(+). Its pathway is cell wall biogenesis; peptidoglycan biosynthesis. In terms of biological role, peptidoglycan polymerase that catalyzes glycan chain elongation from lipid-linked precursors. The chain is Biosynthetic peptidoglycan transglycosylase from Escherichia coli O45:K1 (strain S88 / ExPEC).